We begin with the raw amino-acid sequence, 396 residues long: Acetate kinase (396 aa).

Asn-8 contributes to the Mg(2+) binding site. ATP is bound at residue Lys-15. Arg-89 lines the substrate pocket. Asp-146 serves as the catalytic Proton donor/acceptor. Residues 206 to 210, 280 to 282, and 328 to 332 contribute to the ATP site; these read HLGNG, DMR, and GVGEN. Glu-382 contributes to the Mg(2+) binding site.

It belongs to the acetokinase family. In terms of assembly, homodimer. The cofactor is Mg(2+). Mn(2+) serves as cofactor.

The protein resides in the cytoplasm. The enzyme catalyses acetate + ATP = acetyl phosphate + ADP. It participates in metabolic intermediate biosynthesis; acetyl-CoA biosynthesis; acetyl-CoA from acetate: step 1/2. Catalyzes the formation of acetyl phosphate from acetate and ATP. Can also catalyze the reverse reaction. The sequence is that of Acetate kinase from Clavibacter michiganensis subsp. michiganensis (strain NCPPB 382).